A 218-amino-acid chain; its full sequence is Probable nicotinate-nucleotide adenylyltransferase (218 aa).

Belongs to the NadD family.

It catalyses the reaction nicotinate beta-D-ribonucleotide + ATP + H(+) = deamido-NAD(+) + diphosphate. It functions in the pathway cofactor biosynthesis; NAD(+) biosynthesis; deamido-NAD(+) from nicotinate D-ribonucleotide: step 1/1. Functionally, catalyzes the reversible adenylation of nicotinate mononucleotide (NaMN) to nicotinic acid adenine dinucleotide (NaAD). In Helicobacter hepaticus (strain ATCC 51449 / 3B1), this protein is Probable nicotinate-nucleotide adenylyltransferase.